Here is a 413-residue protein sequence, read N- to C-terminus: Glucose-1-phosphate adenylyltransferase (413 aa).

Residues Tyr102, Gly167, 182 to 183 (EK), and Ser200 each bind alpha-D-glucose 1-phosphate.

The protein belongs to the bacterial/plant glucose-1-phosphate adenylyltransferase family. In terms of assembly, homotetramer.

The enzyme catalyses alpha-D-glucose 1-phosphate + ATP + H(+) = ADP-alpha-D-glucose + diphosphate. It participates in glycan biosynthesis; glycogen biosynthesis. Its function is as follows. Involved in the biosynthesis of ADP-glucose, a building block required for the elongation reactions to produce glycogen. Catalyzes the reaction between ATP and alpha-D-glucose 1-phosphate (G1P) to produce pyrophosphate and ADP-Glc. The chain is Glucose-1-phosphate adenylyltransferase from Deinococcus geothermalis (strain DSM 11300 / CIP 105573 / AG-3a).